Reading from the N-terminus, the 20-residue chain is Dihydrolipoamide-residue succinyltransferase component of 2-oxoglutarate dehydrogenase complex (20 aa).

It belongs to the 2-oxoacid dehydrogenase family. Forms a 24-polypeptide structural core with octahedral symmetry. The cofactor is (R)-lipoate.

Its subcellular location is the mitochondrion membrane. The enzyme catalyses N(6)-[(R)-dihydrolipoyl]-L-lysyl-[protein] + succinyl-CoA = N(6)-[(R)-S(8)-succinyldihydrolipoyl]-L-lysyl-[protein] + CoA. Its pathway is amino-acid degradation; L-lysine degradation via saccharopine pathway; glutaryl-CoA from L-lysine: step 6/6. In terms of biological role, the 2-oxoglutarate dehydrogenase complex catalyzes the overall conversion of 2-oxoglutarate to succinyl-CoA and CO(2). It contains multiple copies of three enzymatic components: 2-oxoglutarate dehydrogenase (E1), dihydrolipoamide succinyltransferase (E2) and lipoamide dehydrogenase (E3). The chain is Dihydrolipoamide-residue succinyltransferase component of 2-oxoglutarate dehydrogenase complex from Solanum tuberosum (Potato).